Consider the following 465-residue polypeptide: Siroheme synthase (465 aa).

The precorrin-2 dehydrogenase /sirohydrochlorin ferrochelatase stretch occupies residues 1–203; sequence MDFLPLFHSL…GRPAEAERLL (203 aa). NAD(+) is bound by residues 22–23 and 43–44; these read EV and PQ. S128 carries the post-translational modification Phosphoserine. Residues 217 to 465 form a uroporphyrinogen-III C-methyltransferase region; it reads GEVYLVGAGP…AWFEGAREDA (249 aa). P226 lines the S-adenosyl-L-methionine pocket. The active-site Proton acceptor is the D249. The Proton donor role is filled by K271. Residues 302–304, I307, 332–333, M384, and G413 contribute to the S-adenosyl-L-methionine site; these read GGD and TA.

In the N-terminal section; belongs to the precorrin-2 dehydrogenase / sirohydrochlorin ferrochelatase family. This sequence in the C-terminal section; belongs to the precorrin methyltransferase family.

The enzyme catalyses uroporphyrinogen III + 2 S-adenosyl-L-methionine = precorrin-2 + 2 S-adenosyl-L-homocysteine + H(+). It carries out the reaction precorrin-2 + NAD(+) = sirohydrochlorin + NADH + 2 H(+). The catalysed reaction is siroheme + 2 H(+) = sirohydrochlorin + Fe(2+). It participates in cofactor biosynthesis; adenosylcobalamin biosynthesis; precorrin-2 from uroporphyrinogen III: step 1/1. It functions in the pathway cofactor biosynthesis; adenosylcobalamin biosynthesis; sirohydrochlorin from precorrin-2: step 1/1. Its pathway is porphyrin-containing compound metabolism; siroheme biosynthesis; precorrin-2 from uroporphyrinogen III: step 1/1. The protein operates within porphyrin-containing compound metabolism; siroheme biosynthesis; siroheme from sirohydrochlorin: step 1/1. It participates in porphyrin-containing compound metabolism; siroheme biosynthesis; sirohydrochlorin from precorrin-2: step 1/1. Its function is as follows. Multifunctional enzyme that catalyzes the SAM-dependent methylations of uroporphyrinogen III at position C-2 and C-7 to form precorrin-2 via precorrin-1. Then it catalyzes the NAD-dependent ring dehydrogenation of precorrin-2 to yield sirohydrochlorin. Finally, it catalyzes the ferrochelation of sirohydrochlorin to yield siroheme. This is Siroheme synthase from Pseudomonas aeruginosa (strain LESB58).